Here is a 283-residue protein sequence, read N- to C-terminus: Bifunctional protein FolD 2 (283 aa).

NADP(+) contacts are provided by residues 165-167 (GAS), Ser190, and Ile231.

This sequence belongs to the tetrahydrofolate dehydrogenase/cyclohydrolase family. As to quaternary structure, homodimer.

The enzyme catalyses (6R)-5,10-methylene-5,6,7,8-tetrahydrofolate + NADP(+) = (6R)-5,10-methenyltetrahydrofolate + NADPH. It catalyses the reaction (6R)-5,10-methenyltetrahydrofolate + H2O = (6R)-10-formyltetrahydrofolate + H(+). It participates in one-carbon metabolism; tetrahydrofolate interconversion. In terms of biological role, catalyzes the oxidation of 5,10-methylenetetrahydrofolate to 5,10-methenyltetrahydrofolate and then the hydrolysis of 5,10-methenyltetrahydrofolate to 10-formyltetrahydrofolate. The polypeptide is Bifunctional protein FolD 2 (Bordetella pertussis (strain Tohama I / ATCC BAA-589 / NCTC 13251)).